Here is a 500-residue protein sequence, read N- to C-terminus: Formate-nitrite transporter 3 (500 aa).

Residues 1–31 (MVLAASPEAYRKVIEYGIKKTKLRIDRLFLQ) lie on the Cytoplasmic side of the membrane. A helical transmembrane segment spans residues 32-52 (AIMAGIYVGMAGHACTALAGA). Residues 53-69 (YSTDPANPLAVSKATQK) lie on the Extracellular side of the membrane. Residues 70–90 (FLYASLFPVAFIAIIFTGAEL) form a helical membrane-spanning segment. Residues 91-113 (FTGNTMTMLVCLLERRVTALQLC) are Cytoplasmic-facing. Residues 114–134 (INWICSLVGNWAGALFAAYFL) form a helical membrane-spanning segment. Residues 135-164 (SYLPGVLQDPDHLHYLEDVAAHKTELSFLQ) lie on the Extracellular side of the membrane. The chain crosses the membrane as a helical span at residues 165-185 (CFCLAVGCNTFVCLAVWFVIA). Residues 186–192 (SDDAAGK) are Cytoplasmic-facing. The helical transmembrane segment at 193 to 213 (IMSMWFPIVSFCVAGYEHIIA) threads the bilayer. Topologically, residues 214-237 (NFYTLQCALMHGVGPGVGTVILKN) are extracellular. A helical transmembrane segment spans residues 238 to 258 (FIPTLLGNIVGGCGLVGAVYW). At 259–500 (YNFYPTVCVV…ALEEHPASTI (242 aa)) the chain is on the cytoplasmic side. The segment at 411–500 (PLRENSGVPS…ALEEHPASTI (90 aa)) is disordered. 2 stretches are compositionally biased toward basic and acidic residues: residues 428–444 (GRVR…RGGE) and 466–485 (FHPH…ETRV).

This sequence belongs to the FNT transporter (TC 1.A.16) family. As to quaternary structure, homopentamer.

The protein resides in the cell membrane. The enzyme catalyses (S)-lactate(in) + H(+)(in) = (S)-lactate(out) + H(+)(out). It catalyses the reaction formate(in) + H(+)(in) = formate(out) + H(+)(out). It carries out the reaction pyruvate(out) + H(+)(out) = pyruvate(in) + H(+)(in). The catalysed reaction is acetate(out) + H(+)(out) = acetate(in) + H(+)(in). Its activity is regulated as follows. Inhibited by p-chloromercuribenzene sulfonate (pCMBS). Methyl methanethiosulfonate (MMTS) inhibits L-lactate but not formate transport. Inhibited by the Malaria Box compound MMV007839. Inhibited by BH-296, BH-317, BH-326 and BH-388 compounds. In terms of biological role, monocarboxylate-proton symporter; active in acidic-to-neutral pH range. Transports L-lactate and formate. The protein is Formate-nitrite transporter 3 of Toxoplasma gondii (strain ATCC 50611 / Me49).